A 450-amino-acid polypeptide reads, in one-letter code: MKKGLVVDLSKAAPYLKSHEVAYMQETINQAHNKLHNGTGAGNDFLGWVDLPVNYDKDEFARIKEAAKKIQSDSDVLVVIGIGGSYLGARAAIEMLTNNFYNSMSKDKRKTPAIFYAGNNISSSYMADLLKAIDGLDVSLNVISKSGTTTEPAIAFRILKDYMEKKYGKEEAKKRIYATTDAKKGALKTLADAEGYETFVIPDDVGGRFSVLTAVGLLPIAAAGINIDEMMEGAADAREEYANPSLADNECYKYAAARNALYNKGKAIEILVNYEPSVHYFNEWWKQLYGESEGKDNKGLFPAAVDFSTDLHSMGQYIQEGRRDIFETVINVGSPREEIVIEANDENIDGLNFLAGKTMDYVNKQAFRGTLLAHNDGEVPNVVVNVPELTPYYFGRLVYFFEKACGISGYVLGINPFDQPGVEAYKKNMFALLGKPGFEDLKAELEERLK.

Glutamate 291 (proton donor) is an active-site residue. Catalysis depends on residues histidine 312 and lysine 426.

This sequence belongs to the GPI family.

The protein localises to the cytoplasm. It catalyses the reaction alpha-D-glucose 6-phosphate = beta-D-fructose 6-phosphate. It participates in carbohydrate biosynthesis; gluconeogenesis. Its pathway is carbohydrate degradation; glycolysis; D-glyceraldehyde 3-phosphate and glycerone phosphate from D-glucose: step 2/4. Catalyzes the reversible isomerization of glucose-6-phosphate to fructose-6-phosphate. This chain is Glucose-6-phosphate isomerase, found in Clostridium perfringens (strain ATCC 13124 / DSM 756 / JCM 1290 / NCIMB 6125 / NCTC 8237 / Type A).